Consider the following 260-residue polypeptide: Ribosomal protein L11 methyltransferase (260 aa).

S-adenosyl-L-methionine is bound by residues Thr-119, Gly-140, Asp-162, and Asn-203.

It belongs to the methyltransferase superfamily. PrmA family.

It localises to the cytoplasm. It carries out the reaction L-lysyl-[protein] + 3 S-adenosyl-L-methionine = N(6),N(6),N(6)-trimethyl-L-lysyl-[protein] + 3 S-adenosyl-L-homocysteine + 3 H(+). Its function is as follows. Methylates ribosomal protein L11. The chain is Ribosomal protein L11 methyltransferase from Thermosipho africanus (strain TCF52B).